The primary structure comprises 453 residues: UDP-N-acetylmuramoylalanine--D-glutamate ligase (453 aa).

115 to 121 (GTNGKTT) contributes to the ATP binding site.

It belongs to the MurCDEF family.

It localises to the cytoplasm. It catalyses the reaction UDP-N-acetyl-alpha-D-muramoyl-L-alanine + D-glutamate + ATP = UDP-N-acetyl-alpha-D-muramoyl-L-alanyl-D-glutamate + ADP + phosphate + H(+). It participates in cell wall biogenesis; peptidoglycan biosynthesis. Its function is as follows. Cell wall formation. Catalyzes the addition of glutamate to the nucleotide precursor UDP-N-acetylmuramoyl-L-alanine (UMA). This chain is UDP-N-acetylmuramoylalanine--D-glutamate ligase, found in Geotalea daltonii (strain DSM 22248 / JCM 15807 / FRC-32) (Geobacter daltonii).